We begin with the raw amino-acid sequence, 69 residues long: uncharacterized protein (69 aa).

2 helical membrane passes run 15 to 35 (LIIGLLCVIGIVMLNGLICYV) and 36 to 56 (LYIIAVPSLLYGIGAFIIPKT).

It localises to the cell membrane. This is an uncharacterized protein from Methanocaldococcus jannaschii (strain ATCC 43067 / DSM 2661 / JAL-1 / JCM 10045 / NBRC 100440) (Methanococcus jannaschii).